The sequence spans 270 residues: MKPKMKYSTNKISTAKWKNTASKALCFKLGKSQQKAKEACHVYFMKLRSGLMIKKEACYFRRETTKRPSLKTDRKHKRHLVLAACQQQSTVESFAFGISGVQKYTRALHDSSITGISPITEYLASLSTYNDQSVTFALEDESYEIYVEDLKKDEKKDKVLLSYYESQRPSSESGDGVDGKMLMVTLSPTKDFWLHANNKEHSVELHKCEKPLADQAFFVLHNRPSNCVSFECKTDPGVFIGVKDNHLALIEVDSSENLGTENILFKLSET.

A homeodomain-like HTH domain region spans residues 1–65 (MKPKMKYSTN…EACYFRRETT (65 aa)). A propeptide spanning residues 1–94 (MKPKMKYSTN…CQQQSTVESF (94 aa)) is cleaved from the precursor. Residues 64–111 (TTKRPSLKTDRKHKRHLVLAACQQQSTVESFAFGISGVQKYTRALHDS) are interaction with RELA.

Belongs to the IL-1 family. Highly divergent. As to quaternary structure, forms a 1:1:1 heterotrimeric complex with its primary high-affinity receptor IL1RL1 and the coreceptor IL1RAP. Interacts with cargo receptor TMED10; the interaction mediates the translocation from the cytoplasm into the ERGIC (endoplasmic reticulum-Golgi intermediate compartment) and thereby secretion. In terms of processing, the full-length protein can be released from cells and is able to signal via the IL1RL1/ST2 receptor. However, proteolytic processing by CELA1, CSTG/cathepsin G and ELANE/neutrophil elastase produces C-terminal peptides that are more active than the unprocessed full-length protein. May also be proteolytically processed by calpains. Proteolytic cleavage mediated by apoptotic caspases including CASP3 and CASP7 results in IL33 inactivation. In vitro proteolytic cleavage by CASP1 was reported but could not be confirmed in vivo suggesting that IL33 is probably not a direct substrate for that caspase.

Its subcellular location is the nucleus. The protein resides in the chromosome. The protein localises to the cytoplasm. It localises to the cytoplasmic vesicle. It is found in the secretory vesicle. Its subcellular location is the secreted. In terms of biological role, cytokine that binds to and signals through the IL1RL1/ST2 receptor which in turn activates NF-kappa-B and MAPK signaling pathways in target cells. Involved in the maturation of Th2 cells inducing the secretion of T-helper type 2-associated cytokines. Also involved in activation of mast cells, basophils, eosinophils and natural killer cells. Acts as a chemoattractant for Th2 cells, and may function as an 'alarmin', that amplifies immune responses during tissue injury. Induces rapid UCP2-dependent mitochondrial rewiring that attenuates the generation of reactive oxygen species and preserves the integrity of Krebs cycle required for persistent production of itaconate and subsequent GATA3-dependent differentiation of inflammation-resolving alternatively activated macrophages. Its function is as follows. In quiescent endothelia the uncleaved form is constitutively and abundantly expressed, and acts as a chromatin-associated nuclear factor with transcriptional repressor properties, it may sequester nuclear NF-kappaB/RELA, lowering expression of its targets. This form is rapidely lost upon angiogenic or pro-inflammatory activation. This is Interleukin-33 (IL33) from Pongo abelii (Sumatran orangutan).